An 827-amino-acid polypeptide reads, in one-letter code: DNA gyrase subunit A (827 aa).

Residues 38–501 (LPDARDGLKP…SYENIDIEDL (464 aa)) enclose the Topo IIA-type catalytic domain. Tyr126 functions as the O-(5'-phospho-DNA)-tyrosine intermediate in the catalytic mechanism. The short motif at 528 to 534 (QNRGGKG) is the GyrA-box element.

It belongs to the type II topoisomerase GyrA/ParC subunit family. Heterotetramer, composed of two GyrA and two GyrB chains. In the heterotetramer, GyrA contains the active site tyrosine that forms a transient covalent intermediate with DNA, while GyrB binds cofactors and catalyzes ATP hydrolysis.

The protein localises to the cytoplasm. It carries out the reaction ATP-dependent breakage, passage and rejoining of double-stranded DNA.. A type II topoisomerase that negatively supercoils closed circular double-stranded (ds) DNA in an ATP-dependent manner to modulate DNA topology and maintain chromosomes in an underwound state. Negative supercoiling favors strand separation, and DNA replication, transcription, recombination and repair, all of which involve strand separation. Also able to catalyze the interconversion of other topological isomers of dsDNA rings, including catenanes and knotted rings. Type II topoisomerases break and join 2 DNA strands simultaneously in an ATP-dependent manner. The protein is DNA gyrase subunit A of Helicobacter pylori (strain ATCC 700392 / 26695) (Campylobacter pylori).